The sequence spans 483 residues: Regulatory protein ViaA (483 aa).

It belongs to the ViaA family. Homodimer. Interacts with RavA.

It localises to the cytoplasm. Functionally, component of the RavA-ViaA chaperone complex, which may act on the membrane to optimize the function of some of the respiratory chains. ViaA stimulates the ATPase activity of RavA. In Enterobacter sp. (strain 638), this protein is Regulatory protein ViaA.